We begin with the raw amino-acid sequence, 74 residues long: Fulgimotoxin (74 aa).

Pyrrolidone carboxylic acid is present on Gln1. 5 disulfides stabilise this stretch: Cys10–Cys34, Cys13–Cys21, Cys27–Cys51, Cys55–Cys66, and Cys67–Cys72.

It belongs to the three-finger toxin family. Ancestral subfamily. Boigatoxin sub-subfamily. As to quaternary structure, monomer. Post-translationally, the N-terminus is blocked. Contains 5 disulfide bonds. In terms of tissue distribution, expressed by the venom gland.

It localises to the secreted. Its function is as follows. Reptile-specific three-finger toxin that is lethal at low doses for lizards, but not for mice. Probably acts as a neurotoxin. This chain is Fulgimotoxin, found in Oxybelis fulgidus (Green vine snake).